We begin with the raw amino-acid sequence, 654 residues long: Tetracycline resistance protein TetQ (654 aa).

Residues Met-1–Glu-244 enclose the tr-type G domain. GTP is bound by residues Ala-10–Thr-17, Asp-74–His-78, and Asn-128–Asp-131.

Belongs to the TRAFAC class translation factor GTPase superfamily. Classic translation factor GTPase family. TetM/TetO subfamily.

Abolishes the inhibitory effect of tetracyclin on protein synthesis by a non-covalent modification of the ribosomes. In Prevotella intermedia, this protein is Tetracycline resistance protein TetQ (tetQ).